A 416-amino-acid polypeptide reads, in one-letter code: (S)-ureidoglycine--glyoxylate transaminase (416 aa).

Position 198 is an N6-(pyridoxal phosphate)lysine (lysine 198).

Belongs to the class-V pyridoxal-phosphate-dependent aminotransferase family. As to quaternary structure, homodimer. Requires pyridoxal 5'-phosphate as cofactor.

It carries out the reaction (S)-2-ureidoglycine + glyoxylate = N-carbamoyl-2-oxoglycine + glycine. The protein operates within nitrogen metabolism; (S)-allantoin degradation. Functionally, catalyzes the transamination between an unstable intermediate ((S)-ureidoglycine) and the end product of purine catabolism (glyoxylate) to yield oxalurate and glycine. Glyoxylate is the preferred substrate, but other amino-group acceptors can be used. This chain is (S)-ureidoglycine--glyoxylate transaminase, found in Bacillus subtilis (strain 168).